The primary structure comprises 89 residues: Small ribosomal subunit protein uS15 (89 aa).

It belongs to the universal ribosomal protein uS15 family. As to quaternary structure, part of the 30S ribosomal subunit. Forms a bridge to the 50S subunit in the 70S ribosome, contacting the 23S rRNA.

Its function is as follows. One of the primary rRNA binding proteins, it binds directly to 16S rRNA where it helps nucleate assembly of the platform of the 30S subunit by binding and bridging several RNA helices of the 16S rRNA. In terms of biological role, forms an intersubunit bridge (bridge B4) with the 23S rRNA of the 50S subunit in the ribosome. The sequence is that of Small ribosomal subunit protein uS15 from Janthinobacterium sp. (strain Marseille) (Minibacterium massiliensis).